We begin with the raw amino-acid sequence, 1963 residues long: Myosin-4 (1963 aa).

Residues 28-77 (DSKKNVWIPDPEEGYLAGEITATKGDQVTIVTARGNEVTLKKELVQEMNP) enclose the Myosin N-terminal SH3-like domain. The Myosin motor domain maps to 81–787 (EKTEDMSNLS…VLAHLEDIRD (707 aa)). Residue lysine 125 is modified to N6,N6,N6-trimethyllysine. ATP is bound at residue 174–181 (GESGAGKT). 2 actin-binding regions span residues 662–684 (LNNLMTMLNKTHPHFIRCIIPNE) and 766–780 (RIGLTKVFFKAGVLA). An alpha-helical tailpiece (S2) region spans residues 848–1161 (MLKAGKEAEE…LEELGEKLDE (314 aa)). Positions 848-1963 (MLKAGKEAEE…SPSRARASDF (1116 aa)) form a coiled coil. Composition is skewed to basic and acidic residues over residues 970–988 (LRKAESEKQSKDHQIRSLQ) and 1133–1146 (NERQSRSKADRAKS). Disordered regions lie at residues 970-990 (LRKAESEKQSKDHQIRSLQDE) and 1125-1146 (SELEEELENERQSRSKADRAKS). A hinge region spans residues 1162–1173 (QGGATAAQVEVN). Residues 1162 to 1963 (QGGATAAQVE…SPSRARASDF (802 aa)) form a light meromyosin (LMM) region. Disordered stretches follow at residues 1317–1336 (LTSQLEEARRTADEEARERQ) and 1912–1963 (LEDA…ASDF). A compositionally biased stretch (basic and acidic residues) spans 1322–1336 (EEARRTADEEARERQ).

Belongs to the TRAFAC class myosin-kinesin ATPase superfamily. Myosin family. As to quaternary structure, muscle myosin is a hexameric protein that consists of 2 heavy chain subunits (MHC), 2 alkali light chain subunits (MLC) and 2 regulatory light chain subunits (MLC-2). Forms a complex composed of chaperone unc-45, unc-54 and ubiquitin-protein ligase ufd-2; promotes poly-ubiquitination of unfolded unc-54. Within the complex interacts with unc-45 (via UCS domain) and ufd-2. Interacts with itr-1 (via c-terminal coiled coil domain). In terms of processing, unfolded unc-54 is poly-ubiquitinated by ufd-2.

It localises to the cytoplasm. Its subcellular location is the myofibril. Required for muscle contraction. This is Myosin-4 (unc-54) from Caenorhabditis elegans.